We begin with the raw amino-acid sequence, 402 residues long: Formate-dependent phosphoribosylglycinamide formyltransferase (402 aa).

N(1)-(5-phospho-beta-D-ribosyl)glycinamide-binding positions include glutamate 23–leucine 24 and glutamate 83. Residues arginine 116, lysine 157, serine 162–glutamine 167, glutamate 197–isoleucine 200, and glutamate 205 contribute to the ATP site. Residues arginine 121 to leucine 316 enclose the ATP-grasp domain. Residues glutamate 275 and glutamate 287 each contribute to the Mg(2+) site. Residues aspartate 294, lysine 363, and arginine 370–arginine 371 contribute to the N(1)-(5-phospho-beta-D-ribosyl)glycinamide site.

The protein belongs to the PurK/PurT family. In terms of assembly, homodimer.

It catalyses the reaction N(1)-(5-phospho-beta-D-ribosyl)glycinamide + formate + ATP = N(2)-formyl-N(1)-(5-phospho-beta-D-ribosyl)glycinamide + ADP + phosphate + H(+). It participates in purine metabolism; IMP biosynthesis via de novo pathway; N(2)-formyl-N(1)-(5-phospho-D-ribosyl)glycinamide from N(1)-(5-phospho-D-ribosyl)glycinamide (formate route): step 1/1. Functionally, involved in the de novo purine biosynthesis. Catalyzes the transfer of formate to 5-phospho-ribosyl-glycinamide (GAR), producing 5-phospho-ribosyl-N-formylglycinamide (FGAR). Formate is provided by PurU via hydrolysis of 10-formyl-tetrahydrofolate. This is Formate-dependent phosphoribosylglycinamide formyltransferase from Acinetobacter baumannii (strain ATCC 17978 / DSM 105126 / CIP 53.77 / LMG 1025 / NCDC KC755 / 5377).